The chain runs to 250 residues: DSC E3 ubiquitin ligase complex subunit 3 (250 aa).

The disordered stretch occupies residues 105–130; it reads LASQDQAQSGLNSNSESPDDLQNAQT. Residues 107 to 130 are compositionally biased toward polar residues; sequence SQDQAQSGLNSNSESPDDLQNAQT. Residue asparagine 187 is glycosylated (N-linked (GlcNAc...) asparagine). A run of 2 helical transmembrane segments spans residues 199–219 and 228–248; these read TLLA…YFLW and MQLS…LHSY.

It belongs to the dsc3 family. As to quaternary structure, component of the DSC E3 ubiquitin ligase complex composed of dsc1, dsc2, dsc3 and dsc4.

The protein localises to the endoplasmic reticulum membrane. It is found in the golgi apparatus membrane. It participates in protein modification; protein ubiquitination. Functionally, component of the DSC E3 ubiquitin ligase complex which is required for the sre1 transcriptional activator proteolytic cleavage to release the soluble transcription factor from the membrane in low oxygen or sterol conditions. The complex also plays an important role in the multivesicular body (MVB) pathway and functions in a post-endoplasmic reticulum pathway for protein degradation. The sequence is that of DSC E3 ubiquitin ligase complex subunit 3 (dsc3) from Schizosaccharomyces pombe (strain 972 / ATCC 24843) (Fission yeast).